The following is an 824-amino-acid chain: MASPALRHFLPRFGAAAAAASFLSLAGCQLGGNDPETVLPVSGTFPLKGLAQNVSVRRNNMGMPLIESSSYHDALFTLGYVHAGDRISQMLGMRLLAQGRLSEMAGADALDVDRLMRSVNLKQNASDLYNAASPRLKRFFDVYARGVNAYLFRYRDKLPADIASSGYKPEYWKPEDSALIFSLLNFSLSVNLQEELSALVLAQKVSADKLAWLLPTYPDEELPFAEADKLKGLNLNNQVTGLSDLNRIALQLSDLNMLGVAASSNWAIAPQRSRNGKSLLASDMQLPAGLNSAWSFVQIRAPKYQVSGVTIAGMPLVLSGFNGKLAWSMSNVKGDNQDLFLEKIKREGNRVSYMVDGKWLPAAAHQETFLVKGGSPLRETVYETRHGALLNASATPPGNGLSLALQVPNFKDDKSLDAFFDLSRAPNVEKAFDTSREIRAITLNMIFADASNIGWQVTGRFPNRREGQGLLPSPGWDGKYDWDGFADSMLHPYDQDPRQGWLAAANQRTIPKGYGMQLSNSWGYPERAERIAELANGGKQDLRSTIAMQYDQTTTFAAKLKSMFQAPGMSKPLKQAIDALPEADRNKAREAFTRLMAFDGKLSATSADAALYELFLQESAKQIFLDELGPETSPAWQALVANASSSYSPQADHLLGRDDSPYWDDVKTPQKEDKPAILARSLAAAITSGDSLLGSDHKAWQWGKLHRDNWASTSPLAKQLGGGEFNRGATPTGGDHTTLNVSGFEWGKGFDARMAPGLRMIVDFSLVEPMTGLISTGQSGNPASPYYANSIEPWQKGQYQSIPVQQQNYEKGYGKQRLTLTPGK.

An N-terminal signal peptide occupies residues 1 to 26 (MASPALRHFLPRFGAAAAAASFLSLA). Serine 264 (nucleophile) is an active-site residue.

This sequence belongs to the peptidase S45 family. In terms of assembly, heterodimer of an alpha subunit and a beta subunit processed from the same precursor.

The protein resides in the periplasm. The catalysed reaction is an N-acyl-L-homoserine lactone + H2O = L-homoserine lactone + a carboxylate. Its function is as follows. Catalyzes the deacylation of acyl-homoserine lactone (AHL or acyl-HSL), releasing homoserine lactone (HSL) and the corresponding fatty acid. Possesses a specificity for the degradation of long-chain acyl-HSLs (side chains of seven or more carbons in length). The protein is Acyl-homoserine lactone acylase QuiP (quiP) of Pseudomonas syringae pv. syringae (strain B728a).